Here is a 406-residue protein sequence, read N- to C-terminus: Argininosuccinate synthase (406 aa).

Residue 8 to 16 (AYSGGLDTS) participates in ATP binding. Tyr-86 provides a ligand contact to L-citrulline. Gly-116 lines the ATP pocket. The L-aspartate site is built by Thr-118, Asn-122, and Asp-123. Asn-122 contacts L-citrulline. Residues Arg-126, Ser-174, Ser-183, Glu-259, and Tyr-271 each coordinate L-citrulline.

Belongs to the argininosuccinate synthase family. Type 1 subfamily. As to quaternary structure, homotetramer.

Its subcellular location is the cytoplasm. It carries out the reaction L-citrulline + L-aspartate + ATP = 2-(N(omega)-L-arginino)succinate + AMP + diphosphate + H(+). It participates in amino-acid biosynthesis; L-arginine biosynthesis; L-arginine from L-ornithine and carbamoyl phosphate: step 2/3. This chain is Argininosuccinate synthase, found in Dehalococcoides mccartyi (strain ATCC BAA-2266 / KCTC 15142 / 195) (Dehalococcoides ethenogenes (strain 195)).